The primary structure comprises 144 residues: Toxin MT0934 (144 aa).

Toxic component of a type II toxin-antitoxin (TA) system. Its toxic effect is neutralized by coexpression with cognate antitoxin MT0933. The sequence is that of Toxin MT0934 from Mycobacterium tuberculosis (strain CDC 1551 / Oshkosh).